Here is a 311-residue protein sequence, read N- to C-terminus: Cell division protein ZipA (311 aa).

At 1–5 the chain is on the periplasmic side; that stretch reads MQELR. A helical membrane pass occupies residues 6-26; that stretch reads FVLIVVGALAIMALLFHGLWT. The Cytoplasmic portion of the chain corresponds to 27-311; the sequence is SKKEGKAKFG…QIVEFKAANA (285 aa). The segment covering 32 to 54 has biased composition (basic and acidic residues); that stretch reads KAKFGDKPLSKLDLGESEPKESE. Residues 32–60 form a disordered region; the sequence is KAKFGDKPLSKLDLGESEPKESEMYVAPE.

Belongs to the ZipA family. In terms of assembly, interacts with FtsZ via their C-terminal domains.

Its subcellular location is the cell inner membrane. Functionally, essential cell division protein that stabilizes the FtsZ protofilaments by cross-linking them and that serves as a cytoplasmic membrane anchor for the Z ring. Also required for the recruitment to the septal ring of downstream cell division proteins. In Vibrio vulnificus (strain YJ016), this protein is Cell division protein ZipA.